Reading from the N-terminus, the 431-residue chain is Synaptotagmin-11 (431 aa).

Residues Met1–Pro15 lie on the Vesicular side of the membrane. The chain crosses the membrane as a helical span at residues Val16–Val36. The Cytoplasmic segment spans residues Trp37–Tyr431. A Phosphoserine modification is found at Ser134. The tract at residues Ser134 to Glu154 is disordered. The segment covering Thr140–Ser151 has biased composition (low complexity). C2 domains lie at Met157–Arg279 and Ser291–His426. The Ca(2+) site is built by Asp250, Ser253, and Asp256.

It belongs to the synaptotagmin family. Homodimer. Can also form heterodimers. Interacts with PRKN. Interacts (via C2 2 domain) with AGO2 and SND1; the interaction with SND1 is direct. Interacts with KIF1A; the interaction increases in presence of calcium. It depends on Ca(2+) as a cofactor. Ubiquitinated, at least by PRKN, and targeted to the proteasome complex for degradation. Ubiquitination is inhibited by ATP13A2.

The protein resides in the cytoplasmic vesicle membrane. It is found in the perikaryon. Its subcellular location is the golgi apparatus. The protein localises to the trans-Golgi network membrane. It localises to the recycling endosome membrane. The protein resides in the lysosome membrane. It is found in the cytoplasmic vesicle. Its subcellular location is the phagosome. The protein localises to the cell projection. It localises to the axon. The protein resides in the dendrite. It is found in the postsynaptic density. Its subcellular location is the clathrin-coated vesicle membrane. In terms of biological role, synaptotagmin family member involved in vesicular and membrane trafficking which does not bind Ca(2+). Inhibits clathrin-mediated and bulk endocytosis, functions to ensure precision in vesicle retrieval. Plays an important role in dopamine transmission by regulating endocytosis and the vesicle-recycling process. Essential component of a neuronal vesicular trafficking pathway that differs from the synaptic vesicle trafficking pathway but is crucial for development and synaptic plasticity. In macrophages and microglia, inhibits the conventional cytokine secretion, of at least IL6 and TNF, and phagocytosis. In astrocytes, regulates lysosome exocytosis, mechanism required for the repair of injured astrocyte cell membrane. Required for the ATP13A2-mediated regulation of the autophagy-lysosome pathway. This is Synaptotagmin-11 from Homo sapiens (Human).